We begin with the raw amino-acid sequence, 97 residues long: Large ribosomal subunit protein bL28 (97 aa).

The protein belongs to the bacterial ribosomal protein bL28 family.

This chain is Large ribosomal subunit protein bL28, found in Bartonella henselae (strain ATCC 49882 / DSM 28221 / CCUG 30454 / Houston 1) (Rochalimaea henselae).